A 547-amino-acid chain; its full sequence is Chaperonin GroEL 2 (547 aa).

Residues 30–33 (TLGP), K51, 87–91 (DGTTT), G415, 479–481 (NAA), and D495 contribute to the ATP site. The interval 525-547 (PKEESAAPAGGGMGGMGGMGGMM) is disordered. Residues 533-547 (AGGGMGGMGGMGGMM) show a composition bias toward gly residues.

The protein belongs to the chaperonin (HSP60) family. In terms of assembly, forms a cylinder of 14 subunits composed of two heptameric rings stacked back-to-back. Interacts with the co-chaperonin GroES.

It localises to the cytoplasm. It catalyses the reaction ATP + H2O + a folded polypeptide = ADP + phosphate + an unfolded polypeptide.. Together with its co-chaperonin GroES, plays an essential role in assisting protein folding. The GroEL-GroES system forms a nano-cage that allows encapsulation of the non-native substrate proteins and provides a physical environment optimized to promote and accelerate protein folding. The polypeptide is Chaperonin GroEL 2 (Anaeromyxobacter dehalogenans (strain 2CP-C)).